A 63-amino-acid chain; its full sequence is Cecropin-C (63 aa).

Residues 1-23 form the signal peptide; that stretch reads MNFNKIFVFVALILAISLGQSEA. Arg-62 carries the post-translational modification Arginine amide.

Belongs to the cecropin family.

The protein resides in the secreted. Cecropins have lytic and antibacterial activity against several Gram-positive and Gram-negative bacteria. In Drosophila orena (Fruit fly), this protein is Cecropin-C (CecC).